We begin with the raw amino-acid sequence, 359 residues long: Type-1 angiotensin II receptor A (359 aa).

The Extracellular segment spans residues 1-25 (MALNSSTEDGIKRIQDDCPRAGRHS). Asn-4 carries N-linked (GlcNAc...) asparagine glycosylation. 2 residues coordinate angiotensin II: Gln-15 and Asp-17. 2 disulfide bridges follow: Cys-18–Cys-274 and Cys-101–Cys-180. Residues 26-55 (YIFVMIPTLYSIIFVVGIFGNSLVVIVIYF) form a helical membrane-spanning segment. Over 56–61 (YMKLKT) the chain is Cytoplasmic. A helical transmembrane segment spans residues 62-89 (VASVFLLNLALADLCFLLTLPLWAVYTA). The Extracellular portion of the chain corresponds to 90–98 (MEYRWPFGN). The chain crosses the membrane as a helical span at residues 99–125 (HLCKIASASVSFNLYASVFLLTCLSID). The Cytoplasmic portion of the chain corresponds to 126–141 (RYLAIVHPMKSRLRRT). The chain crosses the membrane as a helical span at residues 142 to 165 (MLVAKVTCIIIWLMAGLASLPAVI). Over 166 to 190 (HRNVYFIENTNITVCAFHYESRNST) the chain is Extracellular. Arg-167 contacts angiotensin II. An N-linked (GlcNAc...) asparagine glycan is attached at Asn-176. Angiotensin II-binding residues include Phe-182, His-183, and Tyr-184. N-linked (GlcNAc...) asparagine glycosylation occurs at Asn-188. A helical membrane pass occupies residues 191–216 (LPIGLGLTKNILGFLFPFLIILTSYT). An angiotensin II-binding site is contributed by Lys-199. The Cytoplasmic portion of the chain corresponds to 217–239 (LIWKALKKAYEIQKNKPRNDDIF). A helical transmembrane segment spans residues 240–268 (RIIMAIVLFFFFSWVPHQIFTFLDVLIQL). Residues 269–278 (GVIHDCKIAD) are Extracellular-facing. The chain crosses the membrane as a helical span at residues 279–304 (IVDTAMPITICIAYFNNCLNPLFYGF). At 305-359 (LGKKFKKYFLQLLKYIPPKAKSHSSLSTKMSTLSYRPSDNMSSAAKKPASCSEVE) the chain is on the cytoplasmic side. Residues 335–347 (STLSYRPSDNMSS) are compositionally biased toward polar residues. The interval 335 to 359 (STLSYRPSDNMSSAAKKPASCSEVE) is disordered. Cys-355 is lipidated: S-palmitoyl cysteine.

It belongs to the G-protein coupled receptor 1 family. Interacts with MAS1. Interacts with ARRB1. Interacts with FLNA (via filamin repeat 21); increases PKA-mediated phosphorylation of FLNA. In terms of processing, C-terminal Ser or Thr residues may be phosphorylated.

It is found in the cell membrane. Its function is as follows. Receptor for angiotensin II, a vasoconstricting peptide, which acts as a key regulator of blood pressure and sodium retention by the kidney. The activated receptor in turn couples to G-alpha proteins G(q) (GNAQ, GNA11, GNA14 or GNA15) and thus activates phospholipase C and increases the cytosolic Ca(2+) concentrations, which in turn triggers cellular responses such as stimulation of protein kinase C. The polypeptide is Type-1 angiotensin II receptor A (Agtr1a) (Mus musculus (Mouse)).